We begin with the raw amino-acid sequence, 350 residues long: Probable nicotinate-nucleotide adenylyltransferase/Ap4A hydrolase (350 aa).

The naMN adenylyltransferase stretch occupies residues methionine 1 to isoleucine 187. An ap4A hydrolase region spans residues aspartate 196–aspartate 350. One can recognise an HD domain in the interval arginine 198 to asparagine 310. Histidine 201 is a binding site for ADP. Fe cation is bound by residues histidine 201, histidine 230, and aspartate 231. Residues aspartate 231–lysine 234, histidine 261, histidine 287–threonine 288, aspartate 305, and arginine 311 each bind ADP. Aspartate 305 is a Fe cation binding site.

In the N-terminal section; belongs to the NadD family. The protein in the C-terminal section; belongs to the Ap4A hydrolase YqeK family.

It catalyses the reaction nicotinate beta-D-ribonucleotide + ATP + H(+) = deamido-NAD(+) + diphosphate. The enzyme catalyses P(1),P(4)-bis(5'-adenosyl) tetraphosphate + H2O = 2 ADP + 2 H(+). Its pathway is cofactor biosynthesis; NAD(+) biosynthesis; deamido-NAD(+) from nicotinate D-ribonucleotide: step 1/1. Functionally, catalyzes the reversible adenylation of nicotinate mononucleotide (NaMN) to nicotinic acid adenine dinucleotide (NaAD). In terms of biological role, hydrolyzes diadenosine 5',5'''-P1,P4-tetraphosphate (Ap4A) to yield ADP. In Mycoplasma genitalium (strain ATCC 33530 / DSM 19775 / NCTC 10195 / G37) (Mycoplasmoides genitalium), this protein is Probable nicotinate-nucleotide adenylyltransferase/Ap4A hydrolase.